The chain runs to 60 residues: Large ribosomal subunit protein uL30 (60 aa).

The protein belongs to the universal ribosomal protein uL30 family. As to quaternary structure, part of the 50S ribosomal subunit.

This is Large ribosomal subunit protein uL30 from Lactobacillus johnsonii (strain CNCM I-12250 / La1 / NCC 533).